Consider the following 284-residue polypeptide: Polyamine aminopropyltransferase (284 aa).

The region spanning 2-237 (ELWYTEKHTE…GHWLFGFASK (236 aa)) is the PABS domain. Position 31 (Q31) interacts with S-methyl-5'-thioadenosine. Spermidine is bound by residues H62 and D86. S-methyl-5'-thioadenosine is bound by residues E106 and 137–138 (DG). D155 functions as the Proton acceptor in the catalytic mechanism. 155 to 158 (DSTD) is a spermidine binding site. P162 contacts S-methyl-5'-thioadenosine.

This sequence belongs to the spermidine/spermine synthase family. As to quaternary structure, homodimer or homotetramer.

Its subcellular location is the cytoplasm. The enzyme catalyses S-adenosyl 3-(methylsulfanyl)propylamine + putrescine = S-methyl-5'-thioadenosine + spermidine + H(+). It participates in amine and polyamine biosynthesis; spermidine biosynthesis; spermidine from putrescine: step 1/1. Functionally, catalyzes the irreversible transfer of a propylamine group from the amino donor S-adenosylmethioninamine (decarboxy-AdoMet) to putrescine (1,4-diaminobutane) to yield spermidine. This is Polyamine aminopropyltransferase from Clostridium botulinum (strain Eklund 17B / Type B).